A 349-amino-acid polypeptide reads, in one-letter code: Guanine nucleotide-binding protein alpha-13 subunit (349 aa).

Glycine 2 carries the N-myristoyl glycine lipid modification. Cysteine 3 carries the S-palmitoyl cysteine lipid modification. The 315-residue stretch at 35 to 349 (SHIRLLLLGS…VFKDIMKRKR (315 aa)) folds into the G-alpha domain. The tract at residues 38–51 (RLLLLGSAESGKTT) is G1 motif. GTP is bound by residues 43–50 (GSAESGKT), 177–183 (IMAYVPT), 202–206 (DIGGQ), 271–274 (NEID), and alanine 327. The interval 175 to 183 (DLIMAYVPT) is G2 motif. Threonine 183 is a Mg(2+) binding site. Residues 198-207 (FQLFDIGGQK) are G3 motif. The G4 motif stretch occupies residues 267-274 (YLFLNEID). The interval 325–330 (CIAIDT) is G5 motif.

It belongs to the G-alpha family. In terms of assembly, g proteins are composed of 3 units; alpha, beta and gamma. The alpha chain contains the guanine nucleotide binding site.

In terms of biological role, guanine nucleotide-binding proteins (G proteins) are involved as modulators or transducers in various transmembrane signaling systems. The sequence is that of Guanine nucleotide-binding protein alpha-13 subunit from Caenorhabditis briggsae.